The following is a 74-amino-acid chain: Cytochrome c oxidase subunit 2 (74 aa).

At 1–14 (MAHPSQLGLQDAAS) the chain is on the mitochondrial intermembrane side. A helical transmembrane segment spans residues 15–45 (PVMEELLHFHDHALMIVFLISTLVLYIIVAM). Residues 46–74 (VSTKLTDKYTIDSQEIEIVWTVLPAVILI) lie on the Mitochondrial matrix side of the membrane.

The protein belongs to the cytochrome c oxidase subunit 2 family. As to quaternary structure, component of the cytochrome c oxidase (complex IV, CIV), a multisubunit enzyme composed of 14 subunits. The complex is composed of a catalytic core of 3 subunits MT-CO1, MT-CO2 and MT-CO3, encoded in the mitochondrial DNA, and 11 supernumerary subunits COX4I, COX5A, COX5B, COX6A, COX6B, COX6C, COX7A, COX7B, COX7C, COX8 and NDUFA4, which are encoded in the nuclear genome. The complex exists as a monomer or a dimer and forms supercomplexes (SCs) in the inner mitochondrial membrane with NADH-ubiquinone oxidoreductase (complex I, CI) and ubiquinol-cytochrome c oxidoreductase (cytochrome b-c1 complex, complex III, CIII), resulting in different assemblies (supercomplex SCI(1)III(2)IV(1) and megacomplex MCI(2)III(2)IV(2)). Found in a complex with TMEM177, COA6, COX18, COX20, SCO1 and SCO2. Interacts with TMEM177 in a COX20-dependent manner. Interacts with COX20. Interacts with COX16. It depends on Cu cation as a cofactor.

It localises to the mitochondrion inner membrane. The enzyme catalyses 4 Fe(II)-[cytochrome c] + O2 + 8 H(+)(in) = 4 Fe(III)-[cytochrome c] + 2 H2O + 4 H(+)(out). Component of the cytochrome c oxidase, the last enzyme in the mitochondrial electron transport chain which drives oxidative phosphorylation. The respiratory chain contains 3 multisubunit complexes succinate dehydrogenase (complex II, CII), ubiquinol-cytochrome c oxidoreductase (cytochrome b-c1 complex, complex III, CIII) and cytochrome c oxidase (complex IV, CIV), that cooperate to transfer electrons derived from NADH and succinate to molecular oxygen, creating an electrochemical gradient over the inner membrane that drives transmembrane transport and the ATP synthase. Cytochrome c oxidase is the component of the respiratory chain that catalyzes the reduction of oxygen to water. Electrons originating from reduced cytochrome c in the intermembrane space (IMS) are transferred via the dinuclear copper A center (CU(A)) of subunit 2 and heme A of subunit 1 to the active site in subunit 1, a binuclear center (BNC) formed by heme A3 and copper B (CU(B)). The BNC reduces molecular oxygen to 2 water molecules using 4 electrons from cytochrome c in the IMS and 4 protons from the mitochondrial matrix. The protein is Cytochrome c oxidase subunit 2 (mt-co2) of Megalops atlanticus (Tarpon).